We begin with the raw amino-acid sequence, 637 residues long: Probable potassium transport system protein Kup (637 aa).

Transmembrane regions (helical) follow at residues 25 to 45 (ISLA…LYAI), 62 to 82 (VLGV…LKYL), 115 to 135 (WFLV…GMIT), 149 to 169 (IIAP…LTGL), 180 to 200 (VGAL…VLGL), 227 to 247 (LQGF…EALY), 263 to 283 (ILFV…LLLF), 295 to 315 (LVPS…TIIA), 352 to 372 (IYVP…VIGF), 378 to 398 (LAAA…ILFY), 410 to 430 (LATN…FGAS), and 434 to 454 (LFHG…LMLT).

It belongs to the HAK/KUP transporter (TC 2.A.72) family.

It is found in the cell inner membrane. It catalyses the reaction K(+)(in) + H(+)(in) = K(+)(out) + H(+)(out). In terms of biological role, transport of potassium into the cell. Likely operates as a K(+):H(+) symporter. The sequence is that of Probable potassium transport system protein Kup from Chlorobium phaeobacteroides (strain DSM 266 / SMG 266 / 2430).